We begin with the raw amino-acid sequence, 263 residues long: Lens fiber major intrinsic protein (263 aa).

Residues 1 to 9 lie on the Cytoplasmic side of the membrane; the sequence is MWELRSASF. The chain crosses the membrane as a helical span at residues 10–29; it reads WRAIFAEFFATLFYVFFGLG. Residues 30–41 are Extracellular-facing; it reads ASLRWAPGPLHV. The helical transmembrane segment at 42–59 threads the bilayer; it reads LQVALAFGLALAXLVQTV. Residues 60–61 lie on the Cytoplasmic side of the membrane; it reads GH. Residues 62 to 77 constitute an intramembrane region (discontinuously helical); sequence ISGAHVNPAVTFXFLV. The NPA 1 signature appears at 68–70; the sequence is NPA. The Cytoplasmic segment spans residues 78–82; it reads GSQMS. Residues 83–106 form a helical membrane-spanning segment; sequence LLRAFCYMAAQLLGAVAGAAVLYS. Residues 107–127 lie on the Extracellular side of the membrane; the sequence is VTPPAVRGNLALNTLHAGVSV. Residues 128–148 traverse the membrane as a helical segment; sequence XQATTVEIFLTLQFVLCIFAT. The Cytoplasmic segment spans residues 149 to 156; sequence YDERRNGR. The helical transmembrane segment at 157 to 175 threads the bilayer; the sequence is LGSVALAVGFSLTLGHLFG. Topologically, residues 176–178 are extracellular; it reads MYY. Residues 179–193 constitute an intramembrane region (discontinuously helical); that stretch reads TGAGMNPARSFAPAI. The NPA 2 motif lies at 184-186; sequence NPA. The Extracellular segment spans residues 194–200; it reads LTRNFTN. The chain crosses the membrane as a helical span at residues 201 to 222; it reads HWVYWVGPIIGGGLGSLLYDFL. Residues 223–263 lie on the Cytoplasmic side of the membrane; it reads LFPRLKSVSERLSILKGTRPSDNNGQPEGTGEPVELKTQAL. The interaction with CALM stretch occupies residues 227–237; it reads LKSVSERLSIL. Phosphoserine is present on residues Ser-235 and Ser-243. Positions 238–263 are disordered; that stretch reads KGTRPSDNNGQPEGTGEPVELKTQAL. 2 positions are modified to deamidated asparagine; by deterioration: Asn-245 and Asn-246.

The protein belongs to the MIP/aquaporin (TC 1.A.8) family. As to quaternary structure, homotetramer; each monomer provides an independent water pore. Two homotetramers on opposing membranes can dimerize, forming a cell-cell junction. Interacts with CALM; the calcium-calmodulin/CALM complex interacts with the cytoplasmic domains of two aquaporins, leading to channel closure. Interacts with BFSP1 (via C-terminus); prevents calcium-dependent inhibition of the water channel activity. Subject to partial proteolytic cleavage in the eye lens core. Partial proteolysis promotes interactions between tetramers from adjoining membranes. Post-translationally, fatty acylated at Met-1 and Lys-238. The acyl modifications, in decreasing order of ion abundance, are: oleoyl (C18:1) &gt; palmitoyl (C16:0) &gt; stearoyl (C18:0) &gt; eicosenoyl (C20:1) &gt; dihomo-gamma-linolenoyl (C20:3) &gt; palmitoleoyl (C16:1) &gt; eicosadienoyl (C20:2). As to expression, detected in eye lens (at protein level).

Its subcellular location is the cell membrane. The protein resides in the cell junction. The catalysed reaction is H2O(in) = H2O(out). The water channel activity is inhibited by calcium through calmodulin/CALM. Its function is as follows. Aquaporins form homotetrameric transmembrane channels, with each monomer independently mediating water transport across the plasma membrane along its osmotic gradient. Specifically expressed in lens fiber cells, this aquaporin is crucial for maintaining lens water homeostasis and transparency. Beyond water permeability, it also acts as a cell-to-cell adhesion molecule, forming thin junctions between lens fiber cells that are essential for maintaining the ordered structure and transparency of the lens. This chain is Lens fiber major intrinsic protein, found in Cavia porcellus (Guinea pig).